The primary structure comprises 766 residues: AMP deaminase 3 (766 aa).

Phosphoserine occurs at positions 85 and 107. The tract at residues Q89–P114 is disordered. Low complexity predominate over residues P99–T110. The Zn(2+) site is built by H316 and H318. Substrate is bound by residues H318 and K387 to Y392. H585 provides a ligand contact to Zn(2+). E588 provides a ligand contact to substrate. The active-site Proton acceptor is the H607. Zn(2+) is bound at residue D662. D663 to Q666 lines the substrate pocket.

This sequence belongs to the metallo-dependent hydrolases superfamily. Adenosine and AMP deaminases family. Homotetramer. It depends on Zn(2+) as a cofactor. As to expression, found in heart, lung brain, spleen, kidney and to a lesser extent in liver.

It carries out the reaction AMP + H2O + H(+) = IMP + NH4(+). Its pathway is purine metabolism; IMP biosynthesis via salvage pathway; IMP from AMP: step 1/1. Functionally, AMP deaminase plays a critical role in energy metabolism. This is AMP deaminase 3 from Mus musculus (Mouse).